The following is a 199-amino-acid chain: Protein-methionine-sulfoxide reductase heme-binding subunit MsrQ (199 aa).

4 consecutive transmembrane segments (helical) span residues 10 to 30 (WLKV…FWAI), 82 to 102 (LWCF…ELGI), 116 to 136 (PYLT…LTST), and 153 to 173 (VVYL…KILS).

Belongs to the MsrQ family. In terms of assembly, heterodimer of a catalytic subunit (MsrP) and a heme-binding subunit (MsrQ). It depends on FMN as a cofactor. The cofactor is heme b.

It is found in the cell inner membrane. Part of the MsrPQ system that repairs oxidized periplasmic proteins containing methionine sulfoxide residues (Met-O), using respiratory chain electrons. Thus protects these proteins from oxidative-stress damage caused by reactive species of oxygen and chlorine generated by the host defense mechanisms. MsrPQ is essential for the maintenance of envelope integrity under bleach stress, rescuing a wide series of structurally unrelated periplasmic proteins from methionine oxidation, including the primary periplasmic chaperone SurA and the lipoprotein Pal. MsrQ provides electrons for reduction to the reductase catalytic subunit MsrP, using the quinone pool of the respiratory chain. The chain is Protein-methionine-sulfoxide reductase heme-binding subunit MsrQ from Salmonella newport (strain SL254).